We begin with the raw amino-acid sequence, 109 residues long: Cell cycle protein GpsB (109 aa).

The stretch at 36–63 forms a coiled coil; that stretch reads IKDYETYAALVKSLRQEIADLKEELTRK.

This sequence belongs to the GpsB family. In terms of assembly, forms polymers through the coiled coil domains. Interacts with PBP1, MreC and EzrA.

It localises to the cytoplasm. Divisome component that associates with the complex late in its assembly, after the Z-ring is formed, and is dependent on DivIC and PBP2B for its recruitment to the divisome. Together with EzrA, is a key component of the system that regulates PBP1 localization during cell cycle progression. Its main role could be the removal of PBP1 from the cell pole after pole maturation is completed. Also contributes to the recruitment of PBP1 to the division complex. Not essential for septum formation. This chain is Cell cycle protein GpsB, found in Streptococcus pneumoniae serotype 4 (strain ATCC BAA-334 / TIGR4).